A 924-amino-acid chain; its full sequence is Mediator of RNA polymerase II transcription subunit 16 (924 aa).

The protein belongs to the Mediator complex subunit 16 family. Component of the Mediator complex.

It localises to the nucleus. Component of the Mediator complex, a coactivator involved in the regulated transcription of nearly all RNA polymerase II-dependent genes. Mediator functions as a bridge to convey information from gene-specific regulatory proteins to the basal RNA polymerase II transcription machinery. Mediator is recruited to promoters by direct interactions with regulatory proteins and serves as a scaffold for the assembly of a functional preinitiation complex with RNA polymerase II and the general transcription factors. In Yarrowia lipolytica (strain CLIB 122 / E 150) (Yeast), this protein is Mediator of RNA polymerase II transcription subunit 16 (SIN4).